The primary structure comprises 1199 residues: Putative pyruvate-flavodoxin oxidoreductase (1199 aa).

4Fe-4S ferredoxin-type domains follow at residues 681 to 710 and 737 to 766; these read EIPV…GKVY and FTIQ…QPRL. 12 residues coordinate [4Fe-4S] cluster: Cys690, Cys693, Cys696, Cys700, Cys746, Cys749, Cys752, Cys756, Cys820, Cys823, Cys848, and Cys1079.

The protein belongs to the pyruvate:ferredoxin/flavodoxin oxidoreductase family. The cofactor is [4Fe-4S] cluster.

It carries out the reaction oxidized [flavodoxin] + pyruvate + CoA + 2 H(+) = reduced [flavodoxin] + acetyl-CoA + CO2. In terms of biological role, oxidoreductase required for the transfer of electrons from pyruvate to flavodoxin. The protein is Putative pyruvate-flavodoxin oxidoreductase (nifJ) of Synechocystis sp. (strain ATCC 27184 / PCC 6803 / Kazusa).